Here is a 101-residue protein sequence, read N- to C-terminus: NAD(P)H-quinone oxidoreductase subunit 4L, chloroplastic (101 aa).

3 helical membrane passes run 2–22 (ILEHVLVLSAYLFSIGIYGLI), 32–52 (MCLELILNAVNINFVTFSDFF), and 61–81 (IFSIFVIAIAAAEAAIGLAIV).

It belongs to the complex I subunit 4L family. In terms of assembly, NDH is composed of at least 16 different subunits, 5 of which are encoded in the nucleus.

The protein resides in the plastid. Its subcellular location is the chloroplast thylakoid membrane. It carries out the reaction a plastoquinone + NADH + (n+1) H(+)(in) = a plastoquinol + NAD(+) + n H(+)(out). It catalyses the reaction a plastoquinone + NADPH + (n+1) H(+)(in) = a plastoquinol + NADP(+) + n H(+)(out). In terms of biological role, NDH shuttles electrons from NAD(P)H:plastoquinone, via FMN and iron-sulfur (Fe-S) centers, to quinones in the photosynthetic chain and possibly in a chloroplast respiratory chain. The immediate electron acceptor for the enzyme in this species is believed to be plastoquinone. Couples the redox reaction to proton translocation, and thus conserves the redox energy in a proton gradient. The chain is NAD(P)H-quinone oxidoreductase subunit 4L, chloroplastic from Eucalyptus globulus subsp. globulus (Tasmanian blue gum).